The primary structure comprises 492 residues: MSAEAEAIVTTATADVSSPSKTVAVEPVAADTTPDNAPAVSTEGSGKAEQERAEKILKGKELFSQGSRNFLVKSYDEAADELSQVCQLYEEVYGELADELGQPLLLYAKALIAMALDENKVIDVPDEAADDDDEDVDDDEEESAEDGAAKKEEKKDTKEAANGASSSNGKELDTIKEGSDEADSTGEAEQAQSDEKPSKKVPTGVDEVSSSNGGGGAAVNDDERPSTSNGEVTASCSNGAAPAVEEEPEEEEGVSGSLQLAWEILEAAAQIFSRQGLSGLPYLAEVQTELANIEFENGILEAAREDYEKALKIHGELPTRNRRALAELHYKIGLTYLMQQLNKEGATALRQSSVLIEEEIAEIKGKDEPSERDRNNMLDLEETKQEILAKIQEIEEMQAQTIAEVRAALDSYIKPMSSGDAAAASSSSSSSANGAASSSSSSSKGAAAASSSTISSSSAKPTDITHLIKRKKPEDPSSEAEALCSPAKRAAV.

The segment covering 1-14 (MSAEAEAIVTTATA) has biased composition (low complexity). 2 disordered regions span residues 1–52 (MSAE…EQER) and 123–254 (DVPD…EEGV). Residues threonine 32 and threonine 33 each carry the phosphothreonine modification. Acidic residues predominate over residues 124 to 145 (VPDEAADDDDEDVDDDEEESAE). Composition is skewed to basic and acidic residues over residues 147-159 (GAAKKEEKKDTKE) and 170-179 (KELDTIKEGS). 2 positions are modified to phosphoserine: serine 179 and serine 184. At threonine 185 the chain carries Phosphothreonine. Serine 193 is subject to Phosphoserine. Residues 226 to 238 (STSNGEVTASCSN) show a composition bias toward polar residues. Positions 244–253 (VEEEPEEEEG) are enriched in acidic residues. TPR repeat units follow at residues 284 to 317 (AEVQTELANIEFENGILEAAREDYEKALKIHGEL) and 326 to 359 (AELHYKIGLTYLMQQLNKEGATALRQSSVLIEEE). A coiled-coil region spans residues 377–400 (MLDLEETKQEILAKIQEIEEMQAQ). Residues 418–459 (SGDAAAASSSSSSSANGAASSSSSSSKGAAAASSSTISSSSA) show a composition bias toward low complexity. The disordered stretch occupies residues 418 to 492 (SGDAAAASSS…LCSPAKRAAV (75 aa)). Residues serine 478 and serine 485 each carry the phosphoserine modification.

Belongs to the NASP family. As to quaternary structure, interacts with the histone H3-H4 heterodimer; the interaction with H4 is probably indirect and mediated by H3 (His3, His3.3A and His3.3B). Interacts with His2Av; this interaction directly or indirectly destabilizes His2Av.

It localises to the cytoplasm. It is found in the nucleus. Its subcellular location is the perinuclear region. Its function is as follows. Component of the histone chaperone network. Binds and stabilizes histone H3-H4 not bound to chromatin to maintain a soluble reservoir and modulate degradation by chaperone-mediated autophagy. May also bind and stabilize monomeric H3. Maternal effect gene essential for early embryogenesis. In Drosophila melanogaster (Fruit fly), this protein is Nuclear autoantigenic sperm protein homolog.